The following is a 396-amino-acid chain: MAKKVVTDLDLKDKKVLVRVDFNVPMKDGKITNDNRIVAALPTIEYILEQNGKAILFSHLGKVKTEEDKEGKSLRPVAVRLSELLGKEVKFVPTTRGPELEKAIDELKDGEVLLFENTRFEDIDGKKESKNDPELGKYWASLGDVFVNDAFGTAHRAHASNVGIASNLESAAGFLMEKEIKFIGGVVDNPARPLVAILGGAKVSDKIGVIENLLTKADKVLVGGGMTFTFMAAQGQEIGKSLLEADKVELAKGLLEKAGDKLVLPVDAVVSKEFSNDAPFHTVSADSIPADEMGLDIGQATIDLFTKELQGAKTVVWNGPMGVFELSNFAKGTIGVCEAIANLTDATTIIGGGDSAAAAMDLGFADKFTHISTGGGASLEYLEGKELPGVASISDK.

Residues Asp-21–Asn-23, Arg-36, His-59–Lys-62, Arg-119, and Arg-156 each bind substrate. ATP-binding positions include Lys-206, Gly-294, Glu-325, and Gly-352–Ser-355.

It belongs to the phosphoglycerate kinase family. Monomer.

The protein localises to the cytoplasm. It carries out the reaction (2R)-3-phosphoglycerate + ATP = (2R)-3-phospho-glyceroyl phosphate + ADP. It participates in carbohydrate degradation; glycolysis; pyruvate from D-glyceraldehyde 3-phosphate: step 2/5. The polypeptide is Phosphoglycerate kinase (Listeria monocytogenes serovar 1/2a (strain ATCC BAA-679 / EGD-e)).